The primary structure comprises 235 residues: Phosphoribosylaminoimidazole-succinocarboxamide synthase (235 aa).

Belongs to the SAICAR synthetase family.

The enzyme catalyses 5-amino-1-(5-phospho-D-ribosyl)imidazole-4-carboxylate + L-aspartate + ATP = (2S)-2-[5-amino-1-(5-phospho-beta-D-ribosyl)imidazole-4-carboxamido]succinate + ADP + phosphate + 2 H(+). It participates in purine metabolism; IMP biosynthesis via de novo pathway; 5-amino-1-(5-phospho-D-ribosyl)imidazole-4-carboxamide from 5-amino-1-(5-phospho-D-ribosyl)imidazole-4-carboxylate: step 1/2. In Streptococcus thermophilus (strain CNRZ 1066), this protein is Phosphoribosylaminoimidazole-succinocarboxamide synthase.